We begin with the raw amino-acid sequence, 87 residues long: DNA-directed RNA polymerase subunit omega (87 aa).

This sequence belongs to the RNA polymerase subunit omega family. As to quaternary structure, the RNAP catalytic core consists of 2 alpha, 1 beta, 1 beta' and 1 omega subunit. When a sigma factor is associated with the core the holoenzyme is formed, which can initiate transcription.

The enzyme catalyses RNA(n) + a ribonucleoside 5'-triphosphate = RNA(n+1) + diphosphate. Its function is as follows. Promotes RNA polymerase assembly. Latches the N- and C-terminal regions of the beta' subunit thereby facilitating its interaction with the beta and alpha subunits. The protein is DNA-directed RNA polymerase subunit omega of Pseudomonas fluorescens (strain SBW25).